A 373-amino-acid polypeptide reads, in one-letter code: DNA replication and repair protein RecF (373 aa).

30–37 (GENAQGKT) provides a ligand contact to ATP.

It belongs to the RecF family.

It localises to the cytoplasm. Its function is as follows. The RecF protein is involved in DNA metabolism; it is required for DNA replication and normal SOS inducibility. RecF binds preferentially to single-stranded, linear DNA. It also seems to bind ATP. This Bacillus cytotoxicus (strain DSM 22905 / CIP 110041 / 391-98 / NVH 391-98) protein is DNA replication and repair protein RecF.